The chain runs to 446 residues: D(1A) dopamine receptor (446 aa).

Over 1-23 the chain is Extracellular; it reads MRTLNTSAMDGTGLVVERDFSVR. N5 carries N-linked (GlcNAc...) asparagine glycosylation. Residues 24-49 form a helical membrane-spanning segment; that stretch reads ILTACFLSLLILSTLLGNTLVCAAVI. Topologically, residues 50–60 are cytoplasmic; the sequence is RFRHLRSKVTN. Residues 61–87 traverse the membrane as a helical segment; the sequence is FFVISLAVSDLLVAVLVMPWKAVAEIA. The Extracellular segment spans residues 88-96; sequence GFWPFGSFC. Residues C96 and C186 are joined by a disulfide bond. A helical membrane pass occupies residues 97-119; sequence NIWVAFDIMCSTASILNLCVISV. Topologically, residues 120-138 are cytoplasmic; the sequence is DRYWAISSPFRYERKMTPK. The helical transmembrane segment at 139–163 threads the bilayer; sequence AAFILISVAWTLSVLISFIPVQLSW. At 164 to 192 the chain is on the extracellular side; the sequence is HKAKPTSPSDGNATSLAETIDNCDSSLSR. Residue N175 is glycosylated (N-linked (GlcNAc...) asparagine). The chain crosses the membrane as a helical span at residues 193-218; sequence TYAISSSVISFYIPVAIMIVTYTRIY. Residues 219–272 lie on the Cytoplasmic side of the membrane; it reads RIAQKQIRRIAALERAAVHAKNCQTTTGNGKPVECSQPESSFKMSFKRETKVLK. The chain crosses the membrane as a helical span at residues 273-299; it reads TLSVIMGVFVCCWLPFFILNCILPFCG. Residues 300-312 are Extracellular-facing; the sequence is SGETQPFCIDSIT. Residues 313–337 traverse the membrane as a helical segment; that stretch reads FDVFVWFGWANSSLNPIIYAFNADF. Over 338–446 the chain is Cytoplasmic; the sequence is RKAFSTLLGC…PITQNGQHPT (109 aa). 2 S-palmitoyl cysteine lipidation sites follow: C347 and C351.

This sequence belongs to the G-protein coupled receptor 1 family. Interacts with DNAJC14 via its C-terminus. Interacts with DRD2. Interacts with DORIP1.

Its subcellular location is the cell membrane. It localises to the endoplasmic reticulum membrane. It is found in the cell projection. The protein resides in the cilium membrane. The protein localises to the dendrite. Its subcellular location is the dendritic spine. Its function is as follows. Dopamine receptor whose activity is mediated by G proteins which activate adenylyl cyclase. The polypeptide is D(1A) dopamine receptor (DRD1) (Macaca mulatta (Rhesus macaque)).